The following is a 392-amino-acid chain: Protein O-glucosyltransferase 1 (392 aa).

An N-terminal signal peptide occupies residues 1–23 (MERLSGCRLRPWMLLLLLFPVQG). Intrachain disulfides connect cysteine 49-cysteine 56, cysteine 54-cysteine 357, cysteine 102-cysteine 108, and cysteine 263-cysteine 286. An N-linked (GlcNAc...) asparagine glycan is attached at asparagine 53. The interaction with the consensus sequence C-X-S-X-[PA]-C in peptide substrates stretch occupies residues 103–107 (MFPSR). Aspartate 133 (proton donor/acceptor) is an active-site residue. The segment at 172-178 (AVWPLYP) is interaction with the consensus sequence C-X-S-X-[PA]-C in peptide substrates. Tyrosine 177 serves as a coordination point for UDP-alpha-D-glucose. Asparagine 204 carries an N-linked (GlcNAc...) asparagine glycan. UDP-alpha-D-glucose is bound by residues serine 212, arginine 218, and 274-279 (VAASFR). N-linked (GlcNAc...) asparagine glycosylation occurs at asparagine 373. A Prevents secretion from ER motif is present at residues 389–392 (KTEL).

It belongs to the glycosyltransferase 90 family.

The protein resides in the endoplasmic reticulum lumen. The enzyme catalyses L-seryl-[EGF-like domain protein] + UDP-alpha-D-xylose = 3-O-(beta-D-xylosyl)-L-seryl-[EGF-like domain protein] + UDP + H(+). It catalyses the reaction L-seryl-[EGF-like domain protein] + UDP-alpha-D-glucose = 3-O-(beta-D-glucosyl)-L-seryl-[EGF-like domain protein] + UDP + H(+). It functions in the pathway protein modification; protein glycosylation. Functionally, dual specificity glycosyltransferase that catalyzes the transfer of glucose and xylose from UDP-glucose and UDP-xylose, respectively, to a serine residue found in the consensus sequence of C-X-S-X-P-C. Specifically targets extracellular EGF repeats of protein such as CRB2, F7, F9 and NOTCH2. Acts as a positive regulator of Notch signaling by mediating O-glucosylation of Notch, leading to regulate muscle development. Notch glucosylation does not affect Notch ligand binding. Required during early development to promote gastrulation: acts by mediating O-glucosylation of CRB2, which is required for CRB2 localization to the cell membrane. This chain is Protein O-glucosyltransferase 1 (Poglut1), found in Rattus norvegicus (Rat).